Consider the following 220-residue polypeptide: Large ribosomal subunit protein uL3 (220 aa).

Belongs to the universal ribosomal protein uL3 family. In terms of assembly, part of the 50S ribosomal subunit. Forms a cluster with proteins L14 and L19.

In terms of biological role, one of the primary rRNA binding proteins, it binds directly near the 3'-end of the 23S rRNA, where it nucleates assembly of the 50S subunit. The protein is Large ribosomal subunit protein uL3 of Staphylococcus haemolyticus (strain JCSC1435).